The sequence spans 456 residues: MQEPKQTRVRYLILLMLFLVTTINYADRATISIAGSSIQKDFGLDAVTLGYIFSAFGWAYVLGQIPGGWLLDRFGSKKVYAGSIFTWSLFTLLQGYIGEFGISTAVVLLFLLRFMVGLAEAPSFPGNARIVASWFPTKERGTASAIFNSAQYFATRAVRALDGLDRLHLRLAARVHRHGRPGHCVLAHLVDGDLRAERSPAGYAAEVRSSPHGGLVDLEDSKDKKDGGPKWDYIRQLLTNRMMMGIYLGQFCINALTYFFLTWFPVYLVQERGMTILKAGIIASLPAICGFLGGVLGGVISDTLLRRGNSLSVARKTPIVCGMVLSMSMIICNYVDADWMVVCFMALAFFGKAIGALGWAVVSDTSPKQIAGLSGGLFNTFGNLSSISTPIIIGYIIAATGVSKWRWSSWVPTHSFAAISYLFIVGEINRIELKGVTDEPATTAHPGELLPTTRKV.

10 consecutive transmembrane segments (helical) span residues 11–31 (YLIL…RATI), 51–71 (YIFS…GWLL), 78–96 (KVYA…LQGY), 102–119 (ISTA…VGLA), 246–266 (IYLG…WFPV), 280–300 (GIIA…GGVI), 317–337 (TPIV…YVDA), 341–361 (VVCF…GWAV), 381–401 (FGNL…AATG), and 408–428 (SSWV…VGEI).

Belongs to the major facilitator superfamily. Phthalate permease family.

It localises to the cell inner membrane. It catalyses the reaction galactarate(in) + H(+)(in) = galactarate(out) + H(+)(out). The enzyme catalyses D-glucarate(in) + H(+)(in) = D-glucarate(out) + H(+)(out). Functionally, probably involved in the uptake of galactarate and/or D-glucarate. The polypeptide is Probable galactarate/D-glucarate transporter GudP (gudP) (Pseudomonas putida (Arthrobacter siderocapsulatus)).